We begin with the raw amino-acid sequence, 243 residues long: Glutathione S-transferase U14 (243 aa).

The GST N-terminal domain occupies aspartate 5–proline 87. Glutathione contacts are provided by residues aspartate 15 to proline 16, glutamate 44 to lysine 45, lysine 58 to threonine 59, and glutamate 71 to serine 72. The region spanning asparagine 93–leucine 220 is the GST C-terminal domain. Threonine 159 carries the post-translational modification Phosphothreonine.

The protein belongs to the GST superfamily. Tau family.

The protein localises to the cytoplasm. Its subcellular location is the cytosol. The catalysed reaction is RX + glutathione = an S-substituted glutathione + a halide anion + H(+). Its function is as follows. May be involved in the conjugation of reduced glutathione to a wide number of exogenous and endogenous hydrophobic electrophiles and have a detoxification role against certain herbicides. The polypeptide is Glutathione S-transferase U14 (GSTU14) (Arabidopsis thaliana (Mouse-ear cress)).